The sequence spans 1247 residues: E3 ubiquitin-protein ligase hecw-1 (1247 aa).

Residues 602–635 form the WW 1 domain; the sequence is TPPESHWKTYLDAKKRKFYVNHVTKETRWTKPDT. The segment at 633–659 is disordered; sequence PDTLNNNHIEPETPVHKRLSDRSASPR. Residues 641–653 show a composition bias toward basic and acidic residues; sequence IEPETPVHKRLSD. A WW 2 domain is found at 745-777; the sequence is QPLPSGWECITMNNRTVFLNHANKETSFYDPRI. The HECT domain maps to 914–1247; it reads DPFVLKKSRL…IVNGMSYSIE (334 aa). Cys1215 serves as the catalytic Glycyl thioester intermediate.

As to expression, expressed in the nervous system throughout the body. In the anterior ganglion, expression is limited to the two lateral outer labial neurons OLLL and OLLR.

Its subcellular location is the cytoplasm. It carries out the reaction S-ubiquitinyl-[E2 ubiquitin-conjugating enzyme]-L-cysteine + [acceptor protein]-L-lysine = [E2 ubiquitin-conjugating enzyme]-L-cysteine + N(6)-ubiquitinyl-[acceptor protein]-L-lysine.. Its pathway is protein modification; protein ubiquitination. Functionally, E3 ubiquitin-protein ligase. Functions in the OLL neurons in the anterior ganglion to inhibit avoidance to microbial pathogens such as P.aeruginosa although worms do display avoidance behavior, vacating a P.aeruginosa lawn within 24 hours. Likely to act by inhibiting the neuropeptide receptor npr-1. The sequence is that of E3 ubiquitin-protein ligase hecw-1 from Caenorhabditis elegans.